Reading from the N-terminus, the 526-residue chain is ATP synthase subunit alpha (526 aa).

171-178 (GDRQTGKT) contributes to the ATP binding site.

It belongs to the ATPase alpha/beta chains family. F-type ATPases have 2 components, CF(1) - the catalytic core - and CF(0) - the membrane proton channel. CF(1) has five subunits: alpha(3), beta(3), gamma(1), delta(1), epsilon(1). CF(0) has four main subunits: a(1), b(1), b'(1) and c(9-12).

It localises to the cell inner membrane. It carries out the reaction ATP + H2O + 4 H(+)(in) = ADP + phosphate + 5 H(+)(out). Produces ATP from ADP in the presence of a proton gradient across the membrane. The alpha chain is a regulatory subunit. This Chlorobium phaeovibrioides (strain DSM 265 / 1930) (Prosthecochloris vibrioformis (strain DSM 265)) protein is ATP synthase subunit alpha.